The primary structure comprises 236 residues: 2-C-methyl-D-erythritol 4-phosphate cytidylyltransferase (236 aa).

The protein belongs to the IspD/TarI cytidylyltransferase family. IspD subfamily. As to quaternary structure, homodimer.

It carries out the reaction 2-C-methyl-D-erythritol 4-phosphate + CTP + H(+) = 4-CDP-2-C-methyl-D-erythritol + diphosphate. The protein operates within isoprenoid biosynthesis; isopentenyl diphosphate biosynthesis via DXP pathway; isopentenyl diphosphate from 1-deoxy-D-xylulose 5-phosphate: step 2/6. Catalyzes the formation of 4-diphosphocytidyl-2-C-methyl-D-erythritol from CTP and 2-C-methyl-D-erythritol 4-phosphate (MEP). This chain is 2-C-methyl-D-erythritol 4-phosphate cytidylyltransferase, found in Salmonella typhimurium (strain LT2 / SGSC1412 / ATCC 700720).